Here is a 430-residue protein sequence, read N- to C-terminus: 3-phosphoshikimate 1-carboxyvinyltransferase (430 aa).

Residues lysine 20, serine 21, and arginine 25 each contribute to the 3-phosphoshikimate site. Lysine 20 is a binding site for phosphoenolpyruvate. Phosphoenolpyruvate contacts are provided by glycine 90 and arginine 118. Residues serine 163, serine 164, glutamine 165, serine 191, aspartate 311, and lysine 338 each contribute to the 3-phosphoshikimate site. Phosphoenolpyruvate is bound at residue glutamine 165. The active-site Proton acceptor is aspartate 311. 2 residues coordinate phosphoenolpyruvate: arginine 342 and arginine 383.

This sequence belongs to the EPSP synthase family. As to quaternary structure, monomer.

The protein resides in the cytoplasm. It carries out the reaction 3-phosphoshikimate + phosphoenolpyruvate = 5-O-(1-carboxyvinyl)-3-phosphoshikimate + phosphate. It functions in the pathway metabolic intermediate biosynthesis; chorismate biosynthesis. Functionally, catalyzes the transfer of the enolpyruvyl moiety of phosphoenolpyruvate (PEP) to the 5-hydroxyl of shikimate-3-phosphate (S3P) to produce enolpyruvyl shikimate-3-phosphate and inorganic phosphate. This Methanosarcina acetivorans (strain ATCC 35395 / DSM 2834 / JCM 12185 / C2A) protein is 3-phosphoshikimate 1-carboxyvinyltransferase.